The chain runs to 137 residues: Golgin subfamily A member 7 (137 aa).

Residues Cys-69 and Cys-72 are each lipidated (S-palmitoyl cysteine).

It belongs to the ERF4 family. As to quaternary structure, interacts with ZDHHC9.

It is found in the golgi apparatus membrane. In terms of biological role, may be involved in protein transport from Golgi to cell surface. The ZDHHC9-GOLGA7 complex is a palmitoyltransferase specific for HRAS and NRAS. The protein is Golgin subfamily A member 7 (GOLGA7) of Gallus gallus (Chicken).